The following is a 430-amino-acid chain: DD-carboxypeptidase/endopeptidase Mpg (430 aa).

Zn(2+) contacts are provided by H295, D299, and H375.

Belongs to the peptidase M23B family. As to quaternary structure, monomer. Requires Zn(2+) as cofactor. Post-translationally, likely to be synthesized as a proenzyme. The cleavage of the N-terminal domain is probably required for the activation of the enzyme.

It localises to the cell outer membrane. Its activity is regulated as follows. Peptidoglycan (PG) degradation activity is completely inhibited by zinc chelating EDTA and phenanthroline. In terms of biological role, has both endopeptidase and DD-carboxypeptidase activities. Degrades cell wall peptidoglycan (PG) to allow consummate expression of pili. Degrades N.gonorrhoeae and E.coli PG side chains in vitro. Required for proper piliation, which in turn is required for normal colony morphology, resistance to H(2)O(2) damage and defense against killing by human polymorphonuclear leukocytes (PMNs). Involved in type IV pilus biogenesis. Involved in resistance against non-oxidative killing by adherent CXCL8/IL8-primed human PMNs. Protects from killing by PMN-produced antimicrobial factors, which kill by a mechanism completely independent of reactive oxygen species (ROS) production of the PMNs. Provides protection against oxidative damage caused by peroxides H(2)O(2) and cumene hydroperoxide in vitro. The sequence is that of DD-carboxypeptidase/endopeptidase Mpg from Neisseria gonorrhoeae (strain ATCC 700825 / FA 1090).